Reading from the N-terminus, the 114-residue chain is MNQYETVFILTPVLSDVQMKEAVEKFKGILQAEGAEIINEENWGLKKLAYPIQKKSTGFYQLIEFNAEPTVIDKLELNFRRDERVIRFLTFRMDKYAAEYAAKRRSVKSNKKED.

Belongs to the bacterial ribosomal protein bS6 family.

Binds together with bS18 to 16S ribosomal RNA. The sequence is that of Small ribosomal subunit protein bS6 from Bacteroides fragilis (strain YCH46).